The chain runs to 216 residues: MOB kinase activator 1B (216 aa).

N-acetylserine is present on Ser2. A phosphothreonine; by STK4/MST1 mark is found at Thr12 and Thr35. Zn(2+)-binding residues include Cys79, Cys84, His161, and His166.

It belongs to the MOB1/phocein family. In terms of assembly, binds STK38L. Interacts with LATS1 and LATS2. In terms of processing, phosphorylated by STK3/MST2 and STK4/MST1 and this phosphorylation enhances its binding to LATS1. In terms of tissue distribution, adrenal gland, bone marrow, brain, lung, placenta, prostate, salivary gland, skeletal muscle, testis, thymus, thyroid gland, uterus, colon with mucosa, fetal brain and fetal liver.

The protein resides in the cytoplasm. It localises to the nucleus. Its function is as follows. Activator of LATS1/2 in the Hippo signaling pathway which plays a pivotal role in organ size control and tumor suppression by restricting proliferation and promoting apoptosis. The core of this pathway is composed of a kinase cascade wherein STK3/MST2 and STK4/MST1, in complex with its regulatory protein SAV1, phosphorylates and activates LATS1/2 in complex with its regulatory protein MOB1, which in turn phosphorylates and inactivates YAP1 oncoprotein and WWTR1/TAZ. Phosphorylation of YAP1 by LATS1/2 inhibits its translocation into the nucleus to regulate cellular genes important for cell proliferation, cell death, and cell migration. Stimulates the kinase activity of STK38L. The protein is MOB kinase activator 1B of Homo sapiens (Human).